A 149-amino-acid chain; its full sequence is Nucleoside diphosphate kinase (149 aa).

ATP-binding residues include Lys9, Phe57, Arg85, Thr91, Arg102, and Asn112. Residue His115 is the Pros-phosphohistidine intermediate of the active site.

Belongs to the NDK family. In terms of assembly, homotetramer. The cofactor is Mg(2+).

Its subcellular location is the cytoplasm. The enzyme catalyses dZDP + ATP = dZTP + ADP. It carries out the reaction a 2'-deoxyribonucleoside 5'-diphosphate + ATP = a 2'-deoxyribonucleoside 5'-triphosphate + ADP. The catalysed reaction is a ribonucleoside 5'-diphosphate + ATP = a ribonucleoside 5'-triphosphate + ADP. It participates in purine metabolism. Major role in the synthesis of nucleoside triphosphates other than ATP. The ATP gamma phosphate is transferred to the NDP beta phosphate via a ping-pong mechanism, using a phosphorylated active-site intermediate. Functionally, (Microbial infection) Catalyzes the phosphorylation of dZDP to dZTP, when the bacterium is infected by a phage that produces the substrate for the synthesis of dZTP (2- amino-2'-deoxyadenosine 5'-triphosphate), which is then used by the phage as a DNA polymerase substrate. In Picosynechococcus sp. (strain ATCC 27264 / PCC 7002 / PR-6) (Agmenellum quadruplicatum), this protein is Nucleoside diphosphate kinase.